The primary structure comprises 590 residues: Potassium-transporting ATPase potassium-binding subunit (590 aa).

4 consecutive transmembrane segments (helical) span residues 3–23, 63–83, 134–154, and 177–197; these read AFLL…RPLG, HYAL…YALQ, GLAV…IALI, and LYVL…QGAI. The tract at residues 217 to 244 is disordered; sequence PKTDAQGNPIKDAQGNPVTEKATTQKQT. 8 helical membrane-spanning segments follow: residues 284-304, 312-332, 359-379, 388-408, 411-431, 450-470, 515-535, and 558-578; these read FVQM…FGAM, WAVL…EMWA, FGVV…CGAV, ALGG…FGGV, GLYG…LMIG, SIAI…AVLA, VALG…VLAM, and LFVV…YIPA.

Belongs to the KdpA family. As to quaternary structure, the system is composed of three essential subunits: KdpA, KdpB and KdpC.

Its subcellular location is the cell inner membrane. In terms of biological role, part of the high-affinity ATP-driven potassium transport (or Kdp) system, which catalyzes the hydrolysis of ATP coupled with the electrogenic transport of potassium into the cytoplasm. This subunit binds the periplasmic potassium ions and delivers the ions to the membrane domain of KdpB through an intramembrane tunnel. In Ralstonia nicotianae (strain ATCC BAA-1114 / GMI1000) (Ralstonia solanacearum), this protein is Potassium-transporting ATPase potassium-binding subunit.